The primary structure comprises 392 residues: Phosphoglycerate kinase (392 aa).

Residues 21 to 23 (DFN), Arg36, 59 to 62 (HLGR), Arg118, and Arg151 each bind substrate. ATP contacts are provided by residues Lys201, Gly292, Glu323, and 349 to 352 (GGDS).

The protein belongs to the phosphoglycerate kinase family. Monomer.

It localises to the cytoplasm. The enzyme catalyses (2R)-3-phosphoglycerate + ATP = (2R)-3-phospho-glyceroyl phosphate + ADP. The protein operates within carbohydrate degradation; glycolysis; pyruvate from D-glyceraldehyde 3-phosphate: step 2/5. The chain is Phosphoglycerate kinase from Borrelia duttonii (strain Ly).